The following is a 156-amino-acid chain: Snaclec A15 (156 aa).

The first 23 residues, Met-1 to Ala-23, serve as a signal peptide directing secretion. 3 disulfides stabilise this stretch: Cys-27–Cys-38, Cys-55–Cys-152, and Cys-127–Cys-144. A C-type lectin domain is found at Tyr-34–Lys-153. The N-linked (GlcNAc...) asparagine glycan is linked to Asn-141.

The protein belongs to the snaclec family. In terms of assembly, heterodimer; disulfide-linked. As to expression, expressed by the venom gland.

It localises to the secreted. Functionally, interferes with one step of hemostasis (modulation of platelet aggregation, or coagulation cascade, for example). The polypeptide is Snaclec A15 (Macrovipera lebetinus (Levantine viper)).